Consider the following 1034-residue polypeptide: Phosphoenolpyruvate carboxylase (1034 aa).

Catalysis depends on residues H203 and K680.

Belongs to the PEPCase type 1 family. The cofactor is Mg(2+).

It catalyses the reaction oxaloacetate + phosphate = phosphoenolpyruvate + hydrogencarbonate. Forms oxaloacetate, a four-carbon dicarboxylic acid source for the tricarboxylic acid cycle. The protein is Phosphoenolpyruvate carboxylase (ppc) of Synechocystis sp. (strain ATCC 27184 / PCC 6803 / Kazusa).